The primary structure comprises 306 residues: Elongation factor Ts (306 aa).

The tract at residues 80–83 (TDFV) is involved in Mg(2+) ion dislocation from EF-Tu.

This sequence belongs to the EF-Ts family.

It is found in the cytoplasm. Associates with the EF-Tu.GDP complex and induces the exchange of GDP to GTP. It remains bound to the aminoacyl-tRNA.EF-Tu.GTP complex up to the GTP hydrolysis stage on the ribosome. This Methylorubrum populi (strain ATCC BAA-705 / NCIMB 13946 / BJ001) (Methylobacterium populi) protein is Elongation factor Ts.